Consider the following 122-residue polypeptide: Ribosomal protein eL22-like (122 aa).

Phosphoserine is present on residues S112, S118, and S120.

Belongs to the eukaryotic ribosomal protein eL22 family.

The sequence is that of Ribosomal protein eL22-like (RPL22L1) from Homo sapiens (Human).